The sequence spans 292 residues: Aquaporin-3 (292 aa).

At 1-24 (MGRQKELVNRCGEMLHIRYRLLRQ) the chain is on the cytoplasmic side. Residues 25-42 (ALAECLGTLILVMFGCGS) form a helical membrane-spanning segment. Residues 43–56 (VAQVVLSRGTHGGF) lie on the Extracellular side of the membrane. Residues 57-74 (LTINLAFGFAVTLGILIA) traverse the membrane as a helical segment. At 75-78 (GQVS) the chain is on the cytoplasmic side. Residues 79-92 (GAHLNPAVTFAMCF) constitute an intramembrane region (discontinuously helical). Residues 83-85 (NPA) carry the NPA 1 motif. The Cytoplasmic segment spans residues 93–100 (LAREPWIK). A helical membrane pass occupies residues 101–121 (LPVYTLAQTLGAFLGAGIIFG). Over 122 to 159 (LYYDAIWAFANNQLIVSGPNGTAGIFATYPSGHLDMVN) the chain is Extracellular. Asn-141 is a glycosylation site (N-linked (GlcNAc...) asparagine). Residues 160–177 (GFFDQFIGTASLIVCVLA) traverse the membrane as a helical segment. Residues 178–189 (IVDPYNNPVPRG) are Cytoplasmic-facing. Residues 190–206 (LEAFTVGLVVLVIGTSM) traverse the membrane as a helical segment. The Extracellular segment spans residues 207 to 210 (GFNS). Positions 211–224 (GYAVNPARDFGPRL) form an intramembrane region, discontinuously helical. The NPA 2 motif lies at 215–217 (NPA). Topologically, residues 225 to 242 (FTAIAGWGSEVFTTGRHW) are extracellular. Residues 243–264 (WWVPIVSPLLGSIAGVFVYQLM) traverse the membrane as a helical segment. The Cytoplasmic portion of the chain corresponds to 265 to 292 (IGCHLEPPPPSTDEENVKLSHVKHKEQM).

It belongs to the MIP/aquaporin (TC 1.A.8) family. In terms of assembly, homotetramer; each monomer provides an independent glycerol/water pore. Could also exist in other oligomeric states.

It localises to the cell membrane. The protein localises to the basolateral cell membrane. The enzyme catalyses glycerol(in) = glycerol(out). It catalyses the reaction H2O(in) = H2O(out). It carries out the reaction urea(in) = urea(out). The catalysed reaction is H2O2(out) = H2O2(in). Its function is as follows. Aquaglyceroporins form homotetrameric transmembrane channels, with each monomer independently mediating glycerol and water transport across the plasma membrane along their osmotic gradient. Could also be permeable to urea. Also participates in cell permeability to H2O2 and H2O2-mediated signaling. In skin, transports glycerol to the epidermis and stratum corneum, where it maintains hydration, elasticity, and supports lipid biosynthesis for barrier repair. In kidney, contributes to the reabsorption of water, helping the body maintain proper fluid balance. This chain is Aquaporin-3, found in Bos taurus (Bovine).